Here is a 309-residue protein sequence, read N- to C-terminus: Isethionate sulfite-lyase activating enzyme (309 aa).

In terms of domain architecture, Radical SAM core spans 22-309 (HDGPGIRTVV…VVAAEHATDG (288 aa)). Positions 36, 40, 43, 62, 68, 71, 75, 95, 98, 102, and 106 each coordinate [4Fe-4S] cluster. 42-44 (WCS) is a binding site for S-adenosyl-L-methionine. 4Fe-4S ferredoxin-type domains follow at residues 53 to 85 (IELA…RADD) and 86 to 117 (DTIS…YGTT). S-adenosyl-L-methionine is bound by residues Gly-146, 195 to 197 (DIK), and His-268.

It belongs to the organic radical-activating enzymes family. In terms of assembly, monomer. Requires [4Fe-4S] cluster as cofactor.

It carries out the reaction glycyl-[protein] + reduced [flavodoxin] + S-adenosyl-L-methionine = glycin-2-yl radical-[protein] + semiquinone [flavodoxin] + 5'-deoxyadenosine + L-methionine + H(+). The protein operates within organosulfur degradation; alkanesulfonate degradation. Its function is as follows. Involved in an anaerobic respiration pathway that converts the sulfonate isethionate (2-hydroxyethanesulfonate) to ammonia, acetate and sulfide. Catalyzes activation of the isethionate sulfite-lyase IslA under anaerobic conditions by generation of an organic free radical on a glycine residue, via a homolytic cleavage of S-adenosyl-L-methionine (SAM). The sequence is that of Isethionate sulfite-lyase activating enzyme from Oleidesulfovibrio alaskensis (strain ATCC BAA-1058 / DSM 17464 / G20) (Desulfovibrio alaskensis).